Reading from the N-terminus, the 71-residue chain is Large ribosomal subunit protein bL31 (71 aa).

Cys16, Cys18, Cys37, and Cys40 together coordinate Zn(2+).

This sequence belongs to the bacterial ribosomal protein bL31 family. Type A subfamily. In terms of assembly, part of the 50S ribosomal subunit. Requires Zn(2+) as cofactor.

Its function is as follows. Binds the 23S rRNA. The protein is Large ribosomal subunit protein bL31 of Solidesulfovibrio magneticus (strain ATCC 700980 / DSM 13731 / RS-1) (Desulfovibrio magneticus).